Here is a 126-residue protein sequence, read N- to C-terminus: Fluoride-specific ion channel FluC (126 aa).

A run of 4 helical transmembrane segments spans residues 3–23 (MILAVAAGGGLGAVARYLTGV), 39–59 (TVNVTGSFAMGVLAGLGAHVW), 71–91 (VGVLGGFTTFSSFSLDVALLV), and 101–121 (AYVAASFLLSVGGLFAGLALI). Na(+) contacts are provided by Gly75 and Thr78.

It belongs to the fluoride channel Fluc/FEX (TC 1.A.43) family.

The protein localises to the cell inner membrane. The enzyme catalyses fluoride(in) = fluoride(out). Na(+) is not transported, but it plays an essential structural role and its presence is essential for fluoride channel function. Fluoride-specific ion channel. Important for reducing fluoride concentration in the cell, thus reducing its toxicity. The chain is Fluoride-specific ion channel FluC from Rhodospirillum centenum (strain ATCC 51521 / SW).